Consider the following 673-residue polypeptide: MSKPFKLNSAFKPSGDQPEAIRRLEEGLEDGLAHQTLLGVTGSGKTFTIANVIADLQRPTMVLAPNKTLAAQLYGEMKEFFPENAVEYFVSYYDYYQPEAYVPSSDTFIEKDASVNEHIEQMRLSATKAMLERRDVVVVASVSAIYGLGDPDLYLKMMLHLTVGMIIDQRAILRRLAELQYARNDQAFQRGTFRVRGEVIDIFPAESDDIALRVELFDEEVERLSLFDPLTGQIVSTIPRFTIYPKTHYVTPRERIVQAMEEIKEELAARRKVLLENNKLLEEQRLTQRTQFDLEMMNELGYCSGIENYSRFLSGRGPGEPPPTLFDYLPADGLLVVDESHVTIPQIGGMYRGDRARKETLVEYGFRLPSALDNRPLKFEEFEALAPQTIYVSATPGNYELEKSGGDVVDQVVRPTGLLDPIIEVRPVATQVDDLLSEIRQRAAINERVLVTTLTKRMAEDLTEYLEEHGERVRYLHSDIDTVERMEIIRDLRLGEFDVLVGINLLREGLDMPEVSLVAILDADKEGFLRSERSLIQTIGRAARNVNGKAILYGDKITPSMAKAIGETERRREKQQKYNEEHGITPQGLNKKVVDILALGQNIAKTKAKGRGKSRPIVEPDNVPMDMSPKALQQKIHELEGLMMQHAQNLEFEEAAQIRDQLHLLRELFIAAS.

The region spanning Glu26–Arg183 is the Helicase ATP-binding domain. Gly39 to Thr46 lines the ATP pocket. A Beta-hairpin motif is present at residues Tyr92 to Val115. Residues Gln431 to Leu597 enclose the Helicase C-terminal domain. The tract at residues Ala608–Met627 is disordered. Positions Gln633 to Leu668 constitute a UVR domain.

The protein belongs to the UvrB family. Forms a heterotetramer with UvrA during the search for lesions. Interacts with UvrC in an incision complex.

It localises to the cytoplasm. Its function is as follows. The UvrABC repair system catalyzes the recognition and processing of DNA lesions. A damage recognition complex composed of 2 UvrA and 2 UvrB subunits scans DNA for abnormalities. Upon binding of the UvrA(2)B(2) complex to a putative damaged site, the DNA wraps around one UvrB monomer. DNA wrap is dependent on ATP binding by UvrB and probably causes local melting of the DNA helix, facilitating insertion of UvrB beta-hairpin between the DNA strands. Then UvrB probes one DNA strand for the presence of a lesion. If a lesion is found the UvrA subunits dissociate and the UvrB-DNA preincision complex is formed. This complex is subsequently bound by UvrC and the second UvrB is released. If no lesion is found, the DNA wraps around the other UvrB subunit that will check the other stand for damage. In Escherichia coli O81 (strain ED1a), this protein is UvrABC system protein B.